The sequence spans 567 residues: uncharacterized protein (567 aa).

Residues 1–26 (MPSEKATTRHLPGAVETLSPRTGRRP) are disordered. A run of 6 helical transmembrane segments spans residues 57 to 77 (AILVTNVIGLIVGAMLLTVAF), 90 to 110 (VSFGIVPGYCVLAFILGTYWL), 142 to 162 (VALAVLFLWGAAAALWTIIYG), 173 to 193 (LFSMGVIGVVAATSCYLLTEF), 221 to 241 (MLVWLLCSGVPNVGVALTAIF), and 257 to 277 (VLILWAPLLIFGFILMWILAW). The region spanning 277–329 (WLTATPVRVVREALNRVEQGDLSGDLVVFDGTELGELQRGFNRMVEGLRERER) is the HAMP domain. The 125-residue stretch at 361 to 485 (AVVFVDIVGS…EPVNEAARLC (125 aa)) folds into the Guanylate cyclase domain.

This sequence belongs to the adenylyl cyclase class-3 family.

It is found in the cell membrane. This is an uncharacterized protein from Mycobacterium bovis (strain ATCC BAA-935 / AF2122/97).